The sequence spans 182 residues: MPLLNTLATPYAEALLQVTDGRSESDDVAAQCKELLAVWDSSTALRDAMTSPVLEPAAKKQALAQLLAEQIKPSLMNLLKVLADRQRLTALDAVLRRYLELYRESRNISLAHVRCAQALSDDQTKALTAKVQSMVGTGSVEIDLTIDASLIGGFVINIGSQVIDASLSGQVRRLGLSLAKAS.

This sequence belongs to the ATPase delta chain family. In terms of assembly, F-type ATPases have 2 components, F(1) - the catalytic core - and F(0) - the membrane proton channel. F(1) has five subunits: alpha(3), beta(3), gamma(1), delta(1), epsilon(1). CF(0) has four main subunits: a(1), b(1), b'(1) and c(10-14). The alpha and beta chains form an alternating ring which encloses part of the gamma chain. F(1) is attached to F(0) by a central stalk formed by the gamma and epsilon chains, while a peripheral stalk is formed by the delta, b and b' chains.

It localises to the cellular thylakoid membrane. In terms of biological role, f(1)F(0) ATP synthase produces ATP from ADP in the presence of a proton or sodium gradient. F-type ATPases consist of two structural domains, F(1) containing the extramembraneous catalytic core and F(0) containing the membrane proton channel, linked together by a central stalk and a peripheral stalk. During catalysis, ATP synthesis in the catalytic domain of F(1) is coupled via a rotary mechanism of the central stalk subunits to proton translocation. Its function is as follows. This protein is part of the stalk that links CF(0) to CF(1). It either transmits conformational changes from CF(0) to CF(1) or is implicated in proton conduction. The sequence is that of ATP synthase subunit delta from Synechococcus sp. (strain WH7803).